Reading from the N-terminus, the 223-residue chain is Probable transaldolase (223 aa).

The active-site Schiff-base intermediate with substrate is the K92.

It belongs to the transaldolase family. Type 3B subfamily.

The protein localises to the cytoplasm. The enzyme catalyses D-sedoheptulose 7-phosphate + D-glyceraldehyde 3-phosphate = D-erythrose 4-phosphate + beta-D-fructose 6-phosphate. It functions in the pathway carbohydrate degradation; pentose phosphate pathway; D-glyceraldehyde 3-phosphate and beta-D-fructose 6-phosphate from D-ribose 5-phosphate and D-xylulose 5-phosphate (non-oxidative stage): step 2/3. Functionally, transaldolase is important for the balance of metabolites in the pentose-phosphate pathway. This chain is Probable transaldolase, found in Thermus thermophilus (strain ATCC BAA-163 / DSM 7039 / HB27).